Reading from the N-terminus, the 386-residue chain is Homoserine O-succinyltransferase (386 aa).

Residues 49 to 358 enclose the AB hydrolase-1 domain; sequence NAILICHALS…DAEQGHDSFL (310 aa). The active-site Nucleophile is the Ser156. Residue Arg226 coordinates substrate. Active-site residues include Asp321 and His354. Asp355 is a substrate binding site.

Belongs to the AB hydrolase superfamily. MetX family. In terms of assembly, homodimer.

It is found in the cytoplasm. The catalysed reaction is L-homoserine + succinyl-CoA = O-succinyl-L-homoserine + CoA. It functions in the pathway amino-acid biosynthesis; L-methionine biosynthesis via de novo pathway; O-succinyl-L-homoserine from L-homoserine: step 1/1. Functionally, transfers a succinyl group from succinyl-CoA to L-homoserine, forming succinyl-L-homoserine. In Acinetobacter baumannii (strain SDF), this protein is Homoserine O-succinyltransferase.